We begin with the raw amino-acid sequence, 342 residues long: S-adenosylmethionine:tRNA ribosyltransferase-isomerase (342 aa).

This sequence belongs to the QueA family. As to quaternary structure, monomer.

Its subcellular location is the cytoplasm. The catalysed reaction is 7-aminomethyl-7-carbaguanosine(34) in tRNA + S-adenosyl-L-methionine = epoxyqueuosine(34) in tRNA + adenine + L-methionine + 2 H(+). It functions in the pathway tRNA modification; tRNA-queuosine biosynthesis. Its function is as follows. Transfers and isomerizes the ribose moiety from AdoMet to the 7-aminomethyl group of 7-deazaguanine (preQ1-tRNA) to give epoxyqueuosine (oQ-tRNA). This is S-adenosylmethionine:tRNA ribosyltransferase-isomerase from Bacillus pumilus (strain SAFR-032).